We begin with the raw amino-acid sequence, 435 residues long: Elongation factor 1-alpha (435 aa).

Residues 6–231 (KVHINLVVIG…DALEPPKRPV (226 aa)) enclose the tr-type G domain. The G1 stretch occupies residues 15–22 (GHVDSGKS). 15–22 (GHVDSGKS) lines the GTP pocket. The segment at 71-75 (GITID) is G2. Positions 92–95 (DAPG) are G3. Residues 92–96 (DAPGH) and 154–157 (NKMD) contribute to the GTP site. The G4 stretch occupies residues 154–157 (NKMD). Residues 195–197 (SGF) are G5.

Belongs to the TRAFAC class translation factor GTPase superfamily. Classic translation factor GTPase family. EF-Tu/EF-1A subfamily.

Its subcellular location is the cytoplasm. Functionally, this protein promotes the GTP-dependent binding of aminoacyl-tRNA to the A-site of ribosomes during protein biosynthesis. This chain is Elongation factor 1-alpha, found in Tetrahymena pyriformis.